Here is a 284-residue protein sequence, read N- to C-terminus: L-ribulose-5-phosphate 3-epimerase UlaE (284 aa).

The protein belongs to the L-ribulose-5-phosphate 3-epimerase family.

It catalyses the reaction L-ribulose 5-phosphate = L-xylulose 5-phosphate. It functions in the pathway cofactor degradation; L-ascorbate degradation; D-xylulose 5-phosphate from L-ascorbate: step 3/4. In terms of biological role, catalyzes the isomerization of L-xylulose-5-phosphate to L-ribulose-5-phosphate. Is involved in the anaerobic L-ascorbate utilization. The polypeptide is L-ribulose-5-phosphate 3-epimerase UlaE (Escherichia coli O17:K52:H18 (strain UMN026 / ExPEC)).